Here is a 339-residue protein sequence, read N- to C-terminus: Phosphate acyltransferase (339 aa).

It belongs to the PlsX family. In terms of assembly, homodimer. Probably interacts with PlsY.

It localises to the cytoplasm. The catalysed reaction is a fatty acyl-[ACP] + phosphate = an acyl phosphate + holo-[ACP]. The protein operates within lipid metabolism; phospholipid metabolism. Its function is as follows. Catalyzes the reversible formation of acyl-phosphate (acyl-PO(4)) from acyl-[acyl-carrier-protein] (acyl-ACP). This enzyme utilizes acyl-ACP as fatty acyl donor, but not acyl-CoA. The protein is Phosphate acyltransferase of Aeromonas salmonicida (strain A449).